A 91-amino-acid chain; its full sequence is Lipolysis-activating peptide 1-alpha chain (91 aa).

The N-terminal stretch at 1–21 (MNIKLFCFLSILISLTGLSLS) is a signal peptide. The 65-residue stretch at 23–87 (DDGNYPIDAN…FFDAYKTYCK (65 aa)) folds into the LCN-type CS-alpha/beta domain. Cystine bridges form between C38-C61, C47-C66, and C51-C68.

Belongs to the long (3 C-C) scorpion toxin superfamily. Heterodimer of this alpha chain and a beta chain (AC D9U2A2). As to expression, expressed by the venom gland.

It is found in the secreted. The heterodimer LVP1 induces lipolysis in rat adipocytes. Induction of lipolysis by LVP1 appears to be mediated through the beta-2 adrenergic receptor pathway (ADRB2). This is Lipolysis-activating peptide 1-alpha chain from Lychas mucronatus (Chinese swimming scorpion).